The chain runs to 495 residues: Ectonucleoside triphosphate diphosphohydrolase 8 (495 aa).

The Cytoplasmic portion of the chain corresponds to 1-8 (MGLTWKQR). Residues 9-29 (VFTALLGAAAVSGLTALLLVL) traverse the membrane as a helical segment. The Extracellular segment spans residues 30–466 (VGTMNVLLPP…PAQGWAQSFG (437 aa)). Residues Cys78 and Cys102 are joined by a disulfide bond. Residue Glu168 is the Proton acceptor of the active site. Cys246 and Cys292 are disulfide-bonded. N-linked (GlcNAc...) asparagine glycosylation is found at Asn303 and Asn324. Intrachain disulfides connect Cys328–Cys334 and Cys380–Cys403. The chain crosses the membrane as a helical span at residues 467 to 487 (VWAAGVVFVVLTLAATLGAVA). Residues 488 to 495 (VQVFWLQD) are Cytoplasmic-facing.

Belongs to the GDA1/CD39 NTPase family. Requires Ca(2+) as cofactor. Mg(2+) is required as a cofactor. In terms of processing, N-glycosylated.

It is found in the cell membrane. It catalyses the reaction a ribonucleoside 5'-triphosphate + 2 H2O = a ribonucleoside 5'-phosphate + 2 phosphate + 2 H(+). Functionally, canalicular ectonucleoside NTPDase responsible for the main hepatic NTPDase activity. Ectonucleoside NTPDases catalyze the hydrolysis of gamma- and beta-phosphate residues of nucleotides, playing a central role in concentration of extracellular nucleotides. Has activity toward ATP, ADP, UTP and UDP, but not toward AMP. The chain is Ectonucleoside triphosphate diphosphohydrolase 8 (ENTPD8) from Bos taurus (Bovine).